Here is a 135-residue protein sequence, read N- to C-terminus: Interleukin-4 (135 aa).

Positions 1 to 24 (MGLTSQLIPVLVCLLVCTSHFVHG) are cleaved as a signal peptide. 3 disulfides stabilise this stretch: cysteine 27–cysteine 135, cysteine 48–cysteine 85, and cysteine 70–cysteine 105. Asparagine 62 carries N-linked (GlcNAc...) asparagine glycosylation.

This sequence belongs to the IL-4/IL-13 family.

The protein localises to the secreted. In terms of biological role, participates in at least several B-cell activation processes as well as of other cell types. It is a costimulator of DNA-synthesis. It induces the expression of class II MHC molecules on resting B-cells. It enhances both secretion and cell surface expression of IgE and IgG1. It also regulates the expression of the low affinity Fc receptor for IgE (CD23) on both lymphocytes and monocytes. Positively regulates IL31RA expression in macrophages. Stimulates autophagy in dendritic cells by interfering with mTORC1 signaling and through the induction of RUFY4. This chain is Interleukin-4 (IL4), found in Bos taurus (Bovine).